Here is a 265-residue protein sequence, read N- to C-terminus: Small ribosomal subunit protein uS2 (265 aa).

The disordered stretch occupies residues 231-265; it reads VEEEYEDYEGSEEDYDYDETEYADSVIPEDGEEAE.

It belongs to the universal ribosomal protein uS2 family.

The protein is Small ribosomal subunit protein uS2 of Nostoc sp. (strain PCC 7120 / SAG 25.82 / UTEX 2576).